Here is a 235-residue protein sequence, read N- to C-terminus: MLTYQTWEAEEKPSFPHDNETKGALDVLTWAFRQYKDDIVYACSFGVEGIVLIDLISQVKPDAEIVFLDTGLHFRETYKTIEKVKEKYPSLRIVMKKPSLSLEEQAQQLGDELWKHNPNKCCELRKVIPLREALTGITAWISGLRREQSPTRSHVEYINKDDKFKSIKICPLIHWTWKDVWNYVYKRRLPYNVLHDRGYPSIGCEPCTSPALDPNDLRSGRWVGHGKTECGLHIS.

The [4Fe-4S] cluster site is built by Cys121, Cys122, Cys204, and Cys207. The Nucleophile; cysteine thiosulfonate intermediate role is filled by Cys230.

The protein belongs to the PAPS reductase family. CysH subfamily. The cofactor is [4Fe-4S] cluster.

The protein resides in the cytoplasm. It catalyses the reaction [thioredoxin]-disulfide + sulfite + AMP + 2 H(+) = adenosine 5'-phosphosulfate + [thioredoxin]-dithiol. It functions in the pathway sulfur metabolism; hydrogen sulfide biosynthesis; sulfite from sulfate. Its function is as follows. Catalyzes the formation of sulfite from adenosine 5'-phosphosulfate (APS) using thioredoxin as an electron donor. The protein is Adenosine 5'-phosphosulfate reductase of Geobacillus sp. (strain WCH70).